The chain runs to 90 residues: Sec-independent protein translocase protein TatA (90 aa).

Residues 1 to 21 traverse the membrane as a helical segment; the sequence is MGSMSIWHWVIVAVIVMLLFG. The disordered stretch occupies residues 44 to 90; sequence AEDETPPAVQAAPPPAEPVRTIPHATETSPGTAIPASHLPGGERKPV.

Belongs to the TatA/E family. The Tat system comprises two distinct complexes: a TatABC complex, containing multiple copies of TatA, TatB and TatC subunits, and a separate TatA complex, containing only TatA subunits. Substrates initially bind to the TatABC complex, which probably triggers association of the separate TatA complex to form the active translocon.

The protein localises to the cell inner membrane. Part of the twin-arginine translocation (Tat) system that transports large folded proteins containing a characteristic twin-arginine motif in their signal peptide across membranes. TatA could form the protein-conducting channel of the Tat system. The polypeptide is Sec-independent protein translocase protein TatA (Methylobacterium radiotolerans (strain ATCC 27329 / DSM 1819 / JCM 2831 / NBRC 15690 / NCIMB 10815 / 0-1)).